Reading from the N-terminus, the 118-residue chain is Peptidyl-tRNA hydrolase (118 aa).

This sequence belongs to the PTH2 family.

It localises to the cytoplasm. The enzyme catalyses an N-acyl-L-alpha-aminoacyl-tRNA + H2O = an N-acyl-L-amino acid + a tRNA + H(+). Its function is as follows. The natural substrate for this enzyme may be peptidyl-tRNAs which drop off the ribosome during protein synthesis. The polypeptide is Peptidyl-tRNA hydrolase (Thermococcus sibiricus (strain DSM 12597 / MM 739)).